A 268-amino-acid polypeptide reads, in one-letter code: Phosphatidylglycerol--prolipoprotein diacylglyceryl transferase (268 aa).

3 consecutive transmembrane segments (helical) span residues 16–36 (FITL…GIWL), 56–76 (IWLV…FNWG), and 92–112 (GIAI…FTYV). Arg-136 serves as a coordination point for a 1,2-diacyl-sn-glycero-3-phospho-(1'-sn-glycerol). The next 3 helical transmembrane spans lie at 175 to 195 (PTFL…LWLF), 204 to 224 (GTLL…IEGL), and 236 to 256 (IAQV…FRLY).

It belongs to the Lgt family.

It is found in the cell inner membrane. It carries out the reaction L-cysteinyl-[prolipoprotein] + a 1,2-diacyl-sn-glycero-3-phospho-(1'-sn-glycerol) = an S-1,2-diacyl-sn-glyceryl-L-cysteinyl-[prolipoprotein] + sn-glycerol 1-phosphate + H(+). The protein operates within protein modification; lipoprotein biosynthesis (diacylglyceryl transfer). Its function is as follows. Catalyzes the transfer of the diacylglyceryl group from phosphatidylglycerol to the sulfhydryl group of the N-terminal cysteine of a prolipoprotein, the first step in the formation of mature lipoproteins. The protein is Phosphatidylglycerol--prolipoprotein diacylglyceryl transferase of Thermosynechococcus vestitus (strain NIES-2133 / IAM M-273 / BP-1).